A 161-amino-acid chain; its full sequence is Epithelial membrane protein 2 (161 aa).

4 helical membrane-spanning segments follow: residues 1–21, 67–87, 95–115, and 137–157; these read MLVILAFIILFHITSAILLFI, TMILATILCCVGFFVFILQLF, FVFTAIIQLLSAFCVMTGASI, and FVVAWVAFPMTLLSGLMYLVL.

The protein belongs to the PMP-22/EMP/MP20 family. Expressed in the arches, orbits, pectoral fins, vessels, pronephric renal tubules, and glomeruli.

It localises to the golgi apparatus membrane. The protein resides in the cell membrane. The protein localises to the apical cell membrane. It is found in the membrane raft. Its subcellular location is the cytoplasm. It localises to the nucleus. The protein resides in the perinuclear region. Its function is as follows. Functions as a key regulator of cell membrane composition by regulating protein surface expression. Also, plays a role in regulation of processes including cell migration, cell proliferation, cell contraction and cell adhesion. May play a role in glomerular filtration. The sequence is that of Epithelial membrane protein 2 (emp2) from Danio rerio (Zebrafish).